The primary structure comprises 296 residues: N-acetylmuramic acid 6-phosphate etherase (296 aa).

An SIS domain is found at 54–217; it reads VTESFRKGGR…STTSMVGIGK (164 aa). Glutamate 82 acts as the Proton donor in catalysis. Glutamate 113 is a catalytic residue.

It belongs to the GCKR-like family. MurNAc-6-P etherase subfamily. Homodimer.

It catalyses the reaction N-acetyl-D-muramate 6-phosphate + H2O = N-acetyl-D-glucosamine 6-phosphate + (R)-lactate. It functions in the pathway amino-sugar metabolism; N-acetylmuramate degradation. In terms of biological role, specifically catalyzes the cleavage of the D-lactyl ether substituent of MurNAc 6-phosphate, producing GlcNAc 6-phosphate and D-lactate. This chain is N-acetylmuramic acid 6-phosphate etherase, found in Listeria welshimeri serovar 6b (strain ATCC 35897 / DSM 20650 / CCUG 15529 / CIP 8149 / NCTC 11857 / SLCC 5334 / V8).